The chain runs to 787 residues: MQSSKGRRKVGSTTAGAGIDSAEKLDELLISSAICNGEDLGPFVRKTFGTGKPETLLHHLKFFARSKESEIEEVCKAHYQDFIHAVDDLKSLLSDVESLKSALSDSNSKLQSVAAPLLSSLDSLVEAQTVSKNVDLAIGAVTHCVRVMELVSRANQHLQSGNFYMALKCVDSIESDFMEKTPSSTLKRMLENRIPAIRSYVERKVNKEFGDWLVEIRVVSRNLGQLAIGEASAARQREEELRIKQRQAEEQSRLSLRDCVYALNEEEDDEFGSGHEGSDGGSSGGGLLGFDLTPLYRAYHIHQTLSLGDTFKQYYYNNRDLQLTSDFQIAGFFIVEDRVLRTGGGLISKLEVETLWDTAVTKMCAVLEDQFSRMQTANHLLLIKDYVSLLGVSLRRYGYAVDSLLEVLSKHRDKYHELLLSDCRKQITEALSADKFEQMLMKKEYEYSMNVLSFQLQTSEIVPAFPFIAPFSTTVPDCCRIVRSFIEDSVSFMSHGGQLDFYDVVKKYLDRLLGEVLDEALLKLISTSVHGVSQAMQVAANMAVFERACDFFFRHAAHLSGVPLRMAERGRRHFPLTKSQNTAEDTLSGMLKKKIDGFMTLLENVNWTSDDIPQGGNEYMNEVLIYLETLVSTAQQILPAKVLKRVLRDVLAHISEKIVGTLCGDLVKRLSMAAIKGLDVDIQLLDSFTENLTPLLTDKEAREMKKAFVEIRQMINLLLSSHPENFVNPVIRERSYNALDYRKVATVSEKFRDPSDSIFGTFGTRGSRQNPKNKSLDALIKRLKDVS.

Belongs to the SEC15 family. As to quaternary structure, the exocyst complex is composed of SEC3, SEC5, SEC6, SEC8, SEC10, EXO70A1 and EXO84B. Interacts with EXO84B. Binds to EXO70H1 AND EXO70B2. Binds directly to B1L.

It is found in the cytoplasm. It localises to the cytosol. Its subcellular location is the cytoskeleton. The protein resides in the phragmoplast. The protein localises to the secreted. It is found in the cell wall. It localises to the extracellular exosome. Component of the exocyst complex involved in the docking of exocytic vesicles with fusion sites on the plasma membrane during regulated or polarized secretion. Involved in polarized cell growth and organ morphogenesis. During cytokinesis, involved in cell plate initiation, cell plate maturation and formation of new primary cell wall. This is Exocyst complex component SEC15B from Arabidopsis thaliana (Mouse-ear cress).